Consider the following 163-residue polypeptide: Nucleotide-binding protein MAV_4575 (163 aa).

This sequence belongs to the YajQ family.

Functionally, nucleotide-binding protein. The chain is Nucleotide-binding protein MAV_4575 from Mycobacterium avium (strain 104).